Here is a 397-residue protein sequence, read N- to C-terminus: Translocase of chloroplast 34 homolog, chloroplastic (397 aa).

The segment at 1-72 (MAQPPRPAEE…SQPWAGLNRL (72 aa)) is disordered. Composition is skewed to acidic residues over residues 10 to 32 (EYDD…DDES) and 44 to 63 (AGDE…DEDS). The AIG1-type G domain maps to 90-321 (RKQLTVLLLG…YKYHPRLSSK (232 aa)). Residues 99 to 106 (GKSSVGKS) form a G1 region. GTP-binding positions include 102 to 107 (SVGKSS) and 121 to 126 (QAFKLQ). Residue serine 106 coordinates Mg(2+). The interval 121–124 (QAFK) is homodimerization. A G2 region spans residues 126 to 130 (QADTD). The segment at 155–158 (DTCG) is G3. The interval 193–198 (RLDLYR) is homodimerization. The segment at 227-230 (THAN) is G4. GTP contacts are provided by residues histidine 228 and 271-272 (EN). Positions 271–273 (ENS) are G5. A helical membrane pass occupies residues 329 to 349 (LLPVAIAAEVLFYRRFLHPRL). The AKR2A-binding sequence (ABS) required for chloroplast outer envelope membrane targeting signature appears at 350-358 (DDNQRRVER).

Belongs to the TRAFAC class TrmE-Era-EngA-EngB-Septin-like GTPase superfamily. AIG1/Toc34/Toc159-like paraseptin GTPase family. TOC34 subfamily. As to quaternary structure, homodimer, heterodimer with other TOC proteins, and monomer. Part of the TOC core complex that includes 1 protein for the specific recognition of transit peptides surrounded by a ring composed of four proteins forming translocation channels, and four to five GTP-binding proteins providing energy. This core complex can interact with components of the TIC complex to form a larger import complex. Interacts with ARSA1. Mg(2+) serves as cofactor.

The protein localises to the plastid. It localises to the chloroplast outer membrane. Functionally, GTPase involved in protein precursor import into chloroplasts. Seems to recognize chloroplast-destined precursor proteins and regulate their presentation to the translocation channel through GTP hydrolysis. Functions as an essential component of the outer chloroplast membrane translocon (TOC) complex, which, in turn, catalyzes the import of nucleus-encoded precursor polypeptides from the cytoplasm to the chloroplast. This chain is Translocase of chloroplast 34 homolog, chloroplastic, found in Chlamydomonas reinhardtii (Chlamydomonas smithii).